Reading from the N-terminus, the 78-residue chain is Acyl carrier protein 1 (78 aa).

The region spanning 2 to 77 (STIEERVKKI…EAIDYIVAHQ (76 aa)) is the Carrier domain. An O-(pantetheine 4'-phosphoryl)serine modification is found at Ser37.

It belongs to the acyl carrier protein (ACP) family. 4'-phosphopantetheine is transferred from CoA to a specific serine of apo-ACP by AcpS. This modification is essential for activity because fatty acids are bound in thioester linkage to the sulfhydryl of the prosthetic group.

It localises to the cytoplasm. It functions in the pathway lipid metabolism; fatty acid biosynthesis. In terms of biological role, carrier of the growing fatty acid chain in fatty acid biosynthesis. The sequence is that of Acyl carrier protein 1 from Pseudomonas aeruginosa (strain ATCC 15692 / DSM 22644 / CIP 104116 / JCM 14847 / LMG 12228 / 1C / PRS 101 / PAO1).